We begin with the raw amino-acid sequence, 496 residues long: NAD(P)H-quinone oxidoreductase subunit 2 A, chloroplastic (496 aa).

Transmembrane regions (helical) follow at residues 13–33 (SILP…IDLL), 41–61 (TFWS…ILLL), 83–103 (IFRF…VDYI), 110–130 (VTEF…LCGA), 133–153 (LISI…LSGY), 168–188 (LLMG…PYGL), 213–233 (VSIA…LVPF), 245–265 (PTPV…ALAT), 279–299 (WHLP…LIAV), 307–327 (MLAY…IAGD), 338–358 (YMLI…SFGL), 380–400 (LSLV…GFFG), 413–435 (LYFL…SRII), and 470–490 (MILC…IIAI).

This sequence belongs to the complex I subunit 2 family. NDH is composed of at least 16 different subunits, 5 of which are encoded in the nucleus.

It is found in the plastid. The protein localises to the chloroplast thylakoid membrane. It catalyses the reaction a plastoquinone + NADH + (n+1) H(+)(in) = a plastoquinol + NAD(+) + n H(+)(out). The catalysed reaction is a plastoquinone + NADPH + (n+1) H(+)(in) = a plastoquinol + NADP(+) + n H(+)(out). Its function is as follows. NDH shuttles electrons from NAD(P)H:plastoquinone, via FMN and iron-sulfur (Fe-S) centers, to quinones in the photosynthetic chain and possibly in a chloroplast respiratory chain. The immediate electron acceptor for the enzyme in this species is believed to be plastoquinone. Couples the redox reaction to proton translocation, and thus conserves the redox energy in a proton gradient. The sequence is that of NAD(P)H-quinone oxidoreductase subunit 2 A, chloroplastic from Psilotum nudum (Whisk fern).